Here is a 513-residue protein sequence, read N- to C-terminus: Cytochrome P450 77A3 (513 aa).

Cys451 lines the heme pocket.

Belongs to the cytochrome P450 family. Requires heme as cofactor.

This Glycine max (Soybean) protein is Cytochrome P450 77A3 (CYP77A3).